The following is an 869-amino-acid chain: DNA mismatch repair protein MutS (869 aa).

602–609 (GPNMSGKS) is an ATP binding site.

The protein belongs to the DNA mismatch repair MutS family.

In terms of biological role, this protein is involved in the repair of mismatches in DNA. It is possible that it carries out the mismatch recognition step. This protein has a weak ATPase activity. The protein is DNA mismatch repair protein MutS of Bacillus licheniformis (strain ATCC 14580 / DSM 13 / JCM 2505 / CCUG 7422 / NBRC 12200 / NCIMB 9375 / NCTC 10341 / NRRL NRS-1264 / Gibson 46).